A 137-amino-acid chain; its full sequence is Actin-depolymerizing factor 7 (137 aa).

Phosphoserine is present on Ser6. The ADF-H domain maps to 7 to 137 (GMAVEDECKL…SFDIIKSRAL (131 aa)).

The protein belongs to the actin-binding proteins ADF family. As to expression, specifically expressed in pollen.

It is found in the cytoplasm. The protein localises to the cytoskeleton. Functionally, actin-depolymerizing protein. Severs actin filaments (F-actin) and binds to actin monomers. Binds monomeric actin (G-actin) with a marked preference for the ADP-loaded form and inhibits the rate of nucleotide exchange on G-actin. Required for pollen tube growth. Promotes turnover of longitudinal actin cables by severing actin filaments in pollen tubes. This Arabidopsis thaliana (Mouse-ear cress) protein is Actin-depolymerizing factor 7 (ADF7).